A 346-amino-acid polypeptide reads, in one-letter code: Histone PARylation factor 1 (346 aa).

Methionine 1 is modified (N-acetylmethionine). The span at 1–10 shows a compositional bias: basic residues; that stretch reads MVGGGAKRRL. The interval 1–29 is disordered; the sequence is MVGGGAKRRLRGEGPQCEKPVDMKKSKSC. At lysine 19 the chain carries N6-acetyllysine. The span at 19 to 29 shows a compositional bias: basic and acidic residues; sequence KPVDMKKSKSC. Serine 97 carries the ADP-ribosylserine modification. N6-acetyllysine is present on residues lysine 186 and lysine 233. Position 235 is a polyADP-ribosyl aspartic acid (aspartate 235). At tyrosine 238 the chain carries ADP-ribosyltyrosine. PolyADP-ribosyl glutamic acid is present on glutamate 240. The segment at 242 to 346 is interaction with PARP1; it reads PETDASLRRI…SQDDVDQLAA (105 aa). The active-site Proton donor is the glutamate 284.

The protein belongs to the HPF1 family. As to quaternary structure, interacts with PARP1 (via the PARP catalytic domain). Interacts with PARP2 (via the PARP catalytic domain). Interacts with core nucleosomes in a PARP1- and PARP2-dependent manner.

The protein resides in the chromosome. The protein localises to the nucleus. In terms of biological role, cofactor for serine ADP-ribosylation that confers serine specificity on PARP1 and PARP2 and plays a key role in DNA damage response. Initiates the repair of double-strand DNA breaks: recruited to DNA damage sites by PARP1 and PARP2 and switches the amino acid specificity of PARP1 and PARP2 from aspartate or glutamate to serine residues, licensing serine ADP-ribosylation of target proteins. Serine ADP-ribosylation of target proteins, such as histones, promotes decompaction of chromatin and the recruitment of repair factors leading to the reparation of DNA strand breaks. Serine ADP-ribosylation of proteins constitutes the primary form of ADP-ribosylation of proteins in response to DNA damage. HPF1 acts by completing the active site of PARP1 and PARP2: forms a composite active site composed of residues from HPF1 and PARP1 or PARP2. While HPF1 promotes the initiation of serine ADP-ribosylation, it restricts the polymerase activity of PARP1 and PARP2 in order to limit the length of poly-ADP-ribose chains. HPF1 also promotes tyrosine ADP-ribosylation, probably by conferring tyrosine specificity on PARP1. This chain is Histone PARylation factor 1, found in Bos taurus (Bovine).